The chain runs to 892 residues: UPF0182 protein Gura_0902 (892 aa).

The next 7 membrane-spanning stretches (helical) occupy residues 6–26 (FIII…LINF), 50–70 (VGAG…NLHF), 103–123 (LGIL…AMQW), 158–178 (MLKI…GAVY), 201–221 (LAVL…LNGC), 248–268 (ILTV…WQGA), and 271–291 (LALL…KAYP).

This sequence belongs to the UPF0182 family.

It is found in the cell membrane. The protein is UPF0182 protein Gura_0902 of Geotalea uraniireducens (strain Rf4) (Geobacter uraniireducens).